Consider the following 183-residue polypeptide: UPF0398 protein BLi02355/BL05236 (183 aa).

It belongs to the UPF0398 family.

The chain is UPF0398 protein BLi02355/BL05236 from Bacillus licheniformis (strain ATCC 14580 / DSM 13 / JCM 2505 / CCUG 7422 / NBRC 12200 / NCIMB 9375 / NCTC 10341 / NRRL NRS-1264 / Gibson 46).